Here is an 880-residue protein sequence, read N- to C-terminus: DNA-directed RNA polymerase subunit beta C-terminal section (880 aa).

This sequence belongs to the RNA polymerase beta chain family. As to quaternary structure, in plastids the minimal PEP RNA polymerase catalytic core is composed of four subunits: alpha, beta, beta', and beta''. When a (nuclear-encoded) sigma factor is associated with the core the holoenzyme is formed, which can initiate transcription.

The protein localises to the plastid. It localises to the chloroplast. The enzyme catalyses RNA(n) + a ribonucleoside 5'-triphosphate = RNA(n+1) + diphosphate. In terms of biological role, DNA-dependent RNA polymerase catalyzes the transcription of DNA into RNA using the four ribonucleoside triphosphates as substrates. The chain is DNA-directed RNA polymerase subunit beta C-terminal section (rpoB2) from Pleurastrum terricola (Filamentous green alga).